Reading from the N-terminus, the 208-residue chain is Ribosomal RNA small subunit methyltransferase G (208 aa).

S-adenosyl-L-methionine contacts are provided by residues Gly73, Leu78, 124–125, and Arg139; that span reads VE.

The protein belongs to the methyltransferase superfamily. RNA methyltransferase RsmG family.

Its subcellular location is the cytoplasm. It carries out the reaction guanosine(527) in 16S rRNA + S-adenosyl-L-methionine = N(7)-methylguanosine(527) in 16S rRNA + S-adenosyl-L-homocysteine. Its function is as follows. Specifically methylates the N7 position of guanine in position 527 of 16S rRNA. The sequence is that of Ribosomal RNA small subunit methyltransferase G from Aeromonas salmonicida (strain A449).